Consider the following 20-residue polypeptide: Agglutinin beta-3 chain (20 aa).

The tract at residues 1 to 20 (GPNGKSQSIIVGPWGDRVTN) is disordered.

The protein belongs to the jacalin lectin family. Formed of four alpha chains and four beta chains.

In terms of biological role, D-galactose-specific lectin, binds the T-antigen structure Gal-beta1,3-GalNAc. The protein is Agglutinin beta-3 chain of Maclura pomifera (Osage orange).